Consider the following 182-residue polypeptide: Large ribosomal subunit protein uL6 (182 aa).

The protein belongs to the universal ribosomal protein uL6 family. Part of the 50S ribosomal subunit.

Functionally, this protein binds to the 23S rRNA, and is important in its secondary structure. It is located near the subunit interface in the base of the L7/L12 stalk, and near the tRNA binding site of the peptidyltransferase center. This chain is Large ribosomal subunit protein uL6, found in Methanocaldococcus jannaschii (strain ATCC 43067 / DSM 2661 / JAL-1 / JCM 10045 / NBRC 100440) (Methanococcus jannaschii).